The chain runs to 319 residues: MAVNGSALSSGLIVSFGEMLIDFVPTVSGVSLAEAPGFLKAPGGAPANVAIAVTRLGGKSAFVGKLGDDEFGHMLAGILKTNGVQADGINFDKGARTALAFVTLRADGEREFMFYRNPSADMLLTPDELNLDLIRSAKVFHYGSISLIVEPCRSAHLKAMEVAKEAGALLSYDPNLRLPLWSSEAEARKAIKVSDVELEFLTGSDKIDDESAMSLWHPNLKLLLVTLGEKGCNYYTKKFHGSVGGFHVKTVDTTGAGDSFVGALLTKIVDDQAILEDEARLKEVLRFSCACGAITTTKKGAIPALPTESEALTLLKGGA.

The protein belongs to the carbohydrate kinase PfkB family. Expressed in swelling stolons and, at higher levels, in developing tubers. Low levels found in leaves and stems from tuberizing plants.

It catalyses the reaction D-fructose + ATP = D-fructose 6-phosphate + ADP + H(+). It participates in glycan biosynthesis; starch biosynthesis. In terms of biological role, may play an important role in maintaining the flux of carbon towards starch formation. In Solanum tuberosum (Potato), this protein is Fructokinase.